The sequence spans 283 residues: Pantothenate synthetase (283 aa).

30 to 37 contacts ATP; sequence MGALHEGH. The active-site Proton donor is His-37. Gln-61 lines the (R)-pantoate pocket. Gln-61 contacts beta-alanine. Residue 149 to 152 coordinates ATP; that stretch reads GEKD. Gln-155 contacts (R)-pantoate. ATP is bound by residues Leu-178 and 186-189; that span reads RSSR.

The protein belongs to the pantothenate synthetase family. In terms of assembly, homodimer.

It localises to the cytoplasm. The catalysed reaction is (R)-pantoate + beta-alanine + ATP = (R)-pantothenate + AMP + diphosphate + H(+). It participates in cofactor biosynthesis; (R)-pantothenate biosynthesis; (R)-pantothenate from (R)-pantoate and beta-alanine: step 1/1. Its function is as follows. Catalyzes the condensation of pantoate with beta-alanine in an ATP-dependent reaction via a pantoyl-adenylate intermediate. The protein is Pantothenate synthetase of Christiangramia forsetii (strain DSM 17595 / CGMCC 1.15422 / KT0803) (Gramella forsetii).